Here is a 103-residue protein sequence, read N- to C-terminus: MSGRGKGGKGLGKGGAKRHRKILRDNIQGITKPAIRRLARRGGVKRISGLIYEDVRAVLKSFLESVIRDAVTYTEHAKRKTVTSLDVVYALKRQGRTLYGFGG.

The segment covering 1–14 (MSGRGKGGKGLGKG) has biased composition (gly residues). The disordered stretch occupies residues 1–20 (MSGRGKGGKGLGKGGAKRHR). An N6-acetyl-N6-methyllysine; alternate modification is found at K6. An N6-methyllysine; alternate mark is found at K6, K9, and K13. An N6-acetyl-N6-methyllysine; alternate modification is found at K13. A DNA-binding region spans residues 17 to 21 (KRHRK). An N6-glutaryllysine modification is found at K92.

It belongs to the histone H4 family. The nucleosome is a histone octamer containing two molecules each of H2A, H2B, H3 and H4 assembled in one H3-H4 heterotetramer and two H2A-H2B heterodimers. The octamer wraps approximately 147 bp of DNA. Glutarylation at Lys-92 (H4K91glu) destabilizes nucleosomes by promoting dissociation of the H2A-H2B dimers from nucleosomes.

Its subcellular location is the nucleus. The protein resides in the chromosome. Core component of nucleosome. Nucleosomes wrap and compact DNA into chromatin, limiting DNA accessibility to the cellular machineries which require DNA as a template. Histones thereby play a central role in transcription regulation, DNA repair, DNA replication and chromosomal stability. DNA accessibility is regulated via a complex set of post-translational modifications of histones, also called histone code, and nucleosome remodeling. The chain is Histone H4.1 (HHF1) from Eremothecium gossypii (strain ATCC 10895 / CBS 109.51 / FGSC 9923 / NRRL Y-1056) (Yeast).